Here is a 419-residue protein sequence, read N- to C-terminus: L-rhamnose isomerase (419 aa).

3 residues coordinate Mn(2+): H262, D294, and D296.

The protein belongs to the rhamnose isomerase family. As to quaternary structure, homotetramer. It depends on Mn(2+) as a cofactor.

The protein resides in the cytoplasm. It catalyses the reaction L-rhamnopyranose = L-rhamnulose. Its pathway is carbohydrate degradation; L-rhamnose degradation; glycerone phosphate from L-rhamnose: step 1/3. In terms of biological role, catalyzes the interconversion of L-rhamnose and L-rhamnulose. This chain is L-rhamnose isomerase, found in Klebsiella pneumoniae subsp. pneumoniae (strain ATCC 700721 / MGH 78578).